The sequence spans 720 residues: Long chain acyl-CoA synthetase 8 (720 aa).

Met-1 is modified (N-acetylmethionine). Residue 279 to 290 (IMFTSGSTGLPK) coordinates ATP. The fatty acid-binding stretch occupies residues 554–582 (DEKGTRWFYTGDIGRFHPDGCLEVIDRKK).

This sequence belongs to the ATP-dependent AMP-binding enzyme family. The cofactor is Mg(2+).

The catalysed reaction is a long-chain fatty acid + ATP + CoA = a long-chain fatty acyl-CoA + AMP + diphosphate. It participates in lipid metabolism; fatty acid metabolism. In terms of biological role, activation of long-chain fatty acids for both synthesis of cellular lipids, and degradation via beta-oxidation. Preferentially uses palmitate, palmitoleate, oleate and linoleate. The protein is Long chain acyl-CoA synthetase 8 (LACS8) of Arabidopsis thaliana (Mouse-ear cress).